The following is a 1031-amino-acid chain: Error-prone DNA polymerase (1031 aa).

Belongs to the DNA polymerase type-C family. DnaE2 subfamily.

It localises to the cytoplasm. It catalyses the reaction DNA(n) + a 2'-deoxyribonucleoside 5'-triphosphate = DNA(n+1) + diphosphate. Functionally, DNA polymerase involved in damage-induced mutagenesis and translesion synthesis (TLS). It is not the major replicative DNA polymerase. This Pseudomonas syringae pv. syringae (strain B728a) protein is Error-prone DNA polymerase.